The chain runs to 70 residues: Non-histone chromosomal protein H6 (70 aa).

Positions methionine 1–lysine 70 are disordered. Residues alanine 30 to lysine 45 show a composition bias toward basic residues. Basic and acidic residues predominate over residues lysine 46–alanine 57.

Belongs to the HMGN family.

The protein localises to the nucleus. It localises to the secreted. In terms of biological role, non-histone protein that probably binds to the inner side of nucleosomal DNA, altering the association between the DNA and the nucleosome octamer. Functionally, oncorhyncin III has antibacterial activity against Gram-positive and Gram-negative bacteria at submicromolar concentrations. The polypeptide is Non-histone chromosomal protein H6 (Oncorhynchus mykiss (Rainbow trout)).